Consider the following 36-residue polypeptide: Photosystem I reaction center subunit VIII (36 aa).

Residues 6-28 form a helical membrane-spanning segment; the sequence is LPSIFVPLIGLFFPAIAMASLFL.

The protein belongs to the PsaI family.

It localises to the plastid. The protein resides in the chloroplast thylakoid membrane. In terms of biological role, may help in the organization of the PsaL subunit. The chain is Photosystem I reaction center subunit VIII from Amborella trichopoda.